Consider the following 58-residue polypeptide: Keratin-associated protein 19-6 (58 aa).

It belongs to the KRTAP type 19 family. As to quaternary structure, interacts with hair keratins.

In the hair cortex, hair keratin intermediate filaments are embedded in an interfilamentous matrix, consisting of hair keratin-associated proteins (KRTAP), which are essential for the formation of a rigid and resistant hair shaft through their extensive disulfide bond cross-linking with abundant cysteine residues of hair keratins. The matrix proteins include the high-sulfur and high-glycine-tyrosine keratins. The chain is Keratin-associated protein 19-6 (KRTAP19-6) from Homo sapiens (Human).